A 185-amino-acid chain; its full sequence is Elongation factor P (185 aa).

The protein belongs to the elongation factor P family.

It localises to the cytoplasm. The protein operates within protein biosynthesis; polypeptide chain elongation. Its function is as follows. Involved in peptide bond synthesis. Stimulates efficient translation and peptide-bond synthesis on native or reconstituted 70S ribosomes in vitro. Probably functions indirectly by altering the affinity of the ribosome for aminoacyl-tRNA, thus increasing their reactivity as acceptors for peptidyl transferase. The sequence is that of Elongation factor P from Azoarcus sp. (strain BH72).